A 152-amino-acid chain; its full sequence is Large ribosomal subunit protein uL15 (152 aa).

Positions 1–12 (MTSTLNTLKSNT) are enriched in polar residues. The interval 1–57 (MTSTLNTLKSNTGSRKKKLRKGRGIAAGQGASCGFGMRGQKSRSGRPTRPGFEGGQM) is disordered. Residues 14 to 23 (SRKKKLRKGR) are compositionally biased toward basic residues. The span at 25-37 (IAAGQGASCGFGM) shows a compositional bias: gly residues.

It belongs to the universal ribosomal protein uL15 family. Part of the 50S ribosomal subunit.

Binds to the 23S rRNA. The sequence is that of Large ribosomal subunit protein uL15 from Prochlorococcus marinus subsp. pastoris (strain CCMP1986 / NIES-2087 / MED4).